The primary structure comprises 162 residues: Protein snakeskin (162 aa).

Topologically, residues 2–6 are cytoplasmic; sequence VSVET. Residues 7–27 traverse the membrane as a helical segment; the sequence is VGSIFIKALKLIINLVIIFLY. At 28 to 53 the chain is on the extracellular side; it reads RWGDGGEFLGIGGTWNLNEEKSADAE. The chain crosses the membrane as a helical span at residues 54-74; sequence IVASGVMVGFLIYTGCHTIAF. Residues 75–88 are Cytoplasmic-facing; the sequence is AFGTTKHKGELCDT. A helical transmembrane segment spans residues 89 to 109; the sequence is IMNVVGCIMWIAVGGVALHYW. Topologically, residues 110–128 are extracellular; that stretch reads KGYMSDEGFLYVNSERQVG. The chain crosses the membrane as a helical span at residues 129–149; it reads IAMGSLCVIEGALYLLDTVLA. Over 150–162 the chain is Cytoplasmic; the sequence is CIHYSKGDTDYTQ.

Forms a complex with Tsp2A and mesh. Interacts with mesh; the interaction may be necessary for the localization of both proteins to the cell apicolateral region.

Its subcellular location is the apicolateral cell membrane. It is found in the cell junction. It localises to the septate junction. Its function is as follows. Required for assembly of smooth septate junctions (sSJs), together with mesh and Tsp2A. May be important for barrier function of the midgut epithelium. This is Protein snakeskin from Drosophila melanogaster (Fruit fly).